The following is a 297-amino-acid chain: Aspartate dehydrogenase domain-containing protein (297 aa).

Residues Ser24 and Ser172 each carry the phosphoserine modification.

Belongs to the L-aspartate dehydrogenase family.

The chain is Aspartate dehydrogenase domain-containing protein from Rattus norvegicus (Rat).